The chain runs to 195 residues: Peptidyl-tRNA hydrolase (195 aa).

Position 17 (Y17) interacts with tRNA. The active-site Proton acceptor is the H22. Positions 68, 70, and 116 each coordinate tRNA.

It belongs to the PTH family. Monomer.

The protein localises to the cytoplasm. The catalysed reaction is an N-acyl-L-alpha-aminoacyl-tRNA + H2O = an N-acyl-L-amino acid + a tRNA + H(+). In terms of biological role, hydrolyzes ribosome-free peptidyl-tRNAs (with 1 or more amino acids incorporated), which drop off the ribosome during protein synthesis, or as a result of ribosome stalling. Catalyzes the release of premature peptidyl moieties from peptidyl-tRNA molecules trapped in stalled 50S ribosomal subunits, and thus maintains levels of free tRNAs and 50S ribosomes. This is Peptidyl-tRNA hydrolase from Pectobacterium carotovorum subsp. carotovorum (strain PC1).